The following is a 143-amino-acid chain: MMIYYRTVRLGDTDAAGVVYFATALSICHEAYEASLEQAYINLRKFFNDPEQAIPIVHGEIDFFRPLFCGEKLEIHLLARQLKDSEFEIEYQIFKGSSEGEKAARALTRHVCINPISRQRSRLPDLMVQWLARINTTESERLY.

Asp-14 is an active-site residue.

This sequence belongs to the 4-hydroxybenzoyl-CoA thioesterase family. DHNA-CoA hydrolase subfamily.

It carries out the reaction 1,4-dihydroxy-2-naphthoyl-CoA + H2O = 1,4-dihydroxy-2-naphthoate + CoA + H(+). It functions in the pathway cofactor biosynthesis; phylloquinone biosynthesis. It participates in quinol/quinone metabolism; 1,4-dihydroxy-2-naphthoate biosynthesis; 1,4-dihydroxy-2-naphthoate from chorismate: step 7/7. Catalyzes the hydrolysis of 1,4-dihydroxy-2-naphthoyl-CoA (DHNA-CoA) to 1,4-dihydroxy-2-naphthoate (DHNA), a reaction involved in phylloquinone (vitamin K1) biosynthesis. The protein is 1,4-dihydroxy-2-naphthoyl-CoA hydrolase of Gloeothece citriformis (strain PCC 7424) (Cyanothece sp. (strain PCC 7424)).